We begin with the raw amino-acid sequence, 87 residues long: Large ribosomal subunit protein bL27 (87 aa).

Residues 1–11 (MASKASGGSTR) are compositionally biased toward polar residues. Residues 1-21 (MASKASGGSTRNGRDSNSKRL) form a disordered region.

It belongs to the bacterial ribosomal protein bL27 family.

This chain is Large ribosomal subunit protein bL27, found in Hydrogenobaculum sp. (strain Y04AAS1).